The sequence spans 225 residues: Uridylate kinase (225 aa).

Position 9-10 (9-10) interacts with ATP; it reads GS. A UMP-binding site is contributed by Gly-44. ATP contacts are provided by Gly-45 and Arg-49. UMP-binding positions include Asp-66 and 114–120; that span reads THPGHTT. The ATP site is built by Thr-140, Asn-141, Tyr-146, and Asp-149.

This sequence belongs to the UMP kinase family. In terms of assembly, homohexamer.

The protein localises to the cytoplasm. The catalysed reaction is UMP + ATP = UDP + ADP. It participates in pyrimidine metabolism; CTP biosynthesis via de novo pathway; UDP from UMP (UMPK route): step 1/1. Its activity is regulated as follows. Inhibited by UTP. Its function is as follows. Catalyzes the reversible phosphorylation of UMP to UDP. In Thermococcus onnurineus (strain NA1), this protein is Uridylate kinase.